Consider the following 296-residue polypeptide: Transmembrane O-methyltransferase (296 aa).

A helical membrane pass occupies residues 36 to 56 (VGTMSPAIALAFLPLVVTLLV). S-adenosyl-L-methionine contacts are provided by residues Glu142, 144 to 145 (GT), Ser150, Glu168, and Ser198.

Belongs to the class I-like SAM-binding methyltransferase superfamily. Cation-dependent O-methyltransferase family. In terms of assembly, interacts with LHFPL5, PCDH15, TMC1, TMC2 and TMIE. Interacts directly with TMC1. The interaction of TOMT with TMC1 and TMC2 is required for the transportation of TMC1/2 into the stereocilia of hair cells.

The protein localises to the membrane. It localises to the cytoplasm. Its subcellular location is the endoplasmic reticulum. It carries out the reaction a catechol + S-adenosyl-L-methionine = a guaiacol + S-adenosyl-L-homocysteine + H(+). In terms of biological role, catalyzes the O-methylation, and thereby the inactivation, of catecholamine neurotransmitters and catechol hormones. Required for auditory function. Component of the cochlear hair cell's mechanotransduction (MET) machinery. Involved in the assembly of the asymmetric tip-link MET complex. Required for transportation of TMC1 and TMC2 proteins into the mechanically sensitive stereocilia of the hair cells. The function in MET is independent of the enzymatic activity. In Macaca mulatta (Rhesus macaque), this protein is Transmembrane O-methyltransferase.